Reading from the N-terminus, the 190-residue chain is E3 ubiquitin-protein ligase RNF183 (190 aa).

At 1 to 159 (MSEPQGQELR…RECVRNPHFR (159 aa)) the chain is on the cytoplasmic side. The RING-type zinc-finger motif lies at 13–60 (CPVCWNPFNNTFHTPKVLDCCHSFCVECLAHLSLVTPARRRLLCPLCR). A helical; Anchor for type IV membrane protein membrane pass occupies residues 160–180 (IFAYLMAVILSVTLLLIFSIF). Residues 181-190 (WTKQFFWGMG) are Lumenal-facing.

Interacts with FATE1. Interacts with SEC16A. Interacts with BCL2L1. Post-translationally, autoubiquitinated (in vitro). Highly expressed in the kidney and testis.

Its subcellular location is the endoplasmic reticulum membrane. The protein localises to the endoplasmic reticulum. It localises to the golgi apparatus. It is found in the cis-Golgi network membrane. The protein resides in the lysosome membrane. It catalyses the reaction S-ubiquitinyl-[E2 ubiquitin-conjugating enzyme]-L-cysteine + [acceptor protein]-L-lysine = [E2 ubiquitin-conjugating enzyme]-L-cysteine + N(6)-ubiquitinyl-[acceptor protein]-L-lysine.. It participates in protein modification; protein ubiquitination. Acts as an E3 ubiquitin ligase catalyzing the covalent attachment of ubiquitin moieties onto substrate proteins. Triggers apoptosis in response to prolonged ER stress by mediating the polyubiquitination and subsequent proteasomal degradation of BCL2L1. May collaborate with FATE1 to restrain BIK protein levels thus regulating apoptotic signaling. This is E3 ubiquitin-protein ligase RNF183 (Rnf183) from Mus musculus (Mouse).